Here is an 817-residue protein sequence, read N- to C-terminus: Protein EFR3 homolog B (817 aa).

Residues Ser212, Ser214, and Ser216 each carry the phosphoserine modification.

The protein belongs to the EFR3 family. In terms of assembly, component of a phosphatidylinositol 4-kinase (PI4K) complex, composed of PI4KA, EFR3 (EFR3A or EFR3B), TTC7 (TTC7A or TTC7B) and HYCC (HYCC1 or HYCC2). Palmitoylated at its N-terminus, anchoring the protein to the plasma membrane.

It localises to the cell membrane. The protein resides in the cytoplasm. Its subcellular location is the cytosol. Its function is as follows. Component of a complex required to localize phosphatidylinositol 4-kinase (PI4K) to the plasma membrane. The complex acts as a regulator of phosphatidylinositol 4-phosphate (PtdIns(4)P) synthesis. In the complex, EFR3B probably acts as the membrane-anchoring component. Also involved in responsiveness to G-protein-coupled receptors; it is however unclear whether this role is direct or indirect. This chain is Protein EFR3 homolog B, found in Homo sapiens (Human).